The primary structure comprises 264 residues: Glutamate racemase (264 aa).

Residues 10 to 11 (DS) and 42 to 43 (YG) contribute to the substrate site. The Proton donor/acceptor role is filled by Cys73. Residue 74 to 75 (NT) coordinates substrate. The active-site Proton donor/acceptor is the Cys183. 184–185 (TH) is a binding site for substrate.

This sequence belongs to the aspartate/glutamate racemases family.

The enzyme catalyses L-glutamate = D-glutamate. It functions in the pathway cell wall biogenesis; peptidoglycan biosynthesis. Provides the (R)-glutamate required for cell wall biosynthesis. The protein is Glutamate racemase of Streptococcus pyogenes serotype M4 (strain MGAS10750).